Here is a 303-residue protein sequence, read N- to C-terminus: Major fimbrium anchoring subunit FimB (303 aa).

Positions 1 to 22 (MNDAKKYIVSVLILLVAGMFGG) are cleaved as a signal peptide. A lipid anchor (N-palmitoyl cysteine) is attached at Cys23. Cys23 is lipidated: S-diacylglycerol cysteine.

Belongs to the bacteroidetes fimbrillin superfamily. FimB/Mfa2 family. In terms of assembly, fimB is not part of the fimbrium itself, but anchors the fimbrium in the outer membrane. Linear, head-to-tail oligomerization of fimbrial subunits mediates assembly of the fimbrium stalk, while the minor components FimC, FimD and FimE probably form the fimbrium tip. The anchoring subunit FimB limits fimbrium length and is important for solid fimbrium attachment to the outer membrane. In its absence, the major fimbriae become very long and are easily detached from the membrane.

The protein resides in the cell outer membrane. In terms of biological role, anchoring subunit of the major fimbriae. Regulates fimbrial length. These filamentous pili are attached to the cell surface; they mediate biofilm formation, adhesion onto host cells and onto other bacteria that are part of the oral microbiome. Fimbriae of P.gingivalis are major virulence factors. The sequence is that of Major fimbrium anchoring subunit FimB from Porphyromonas gingivalis (strain ATCC BAA-308 / W83).